We begin with the raw amino-acid sequence, 284 residues long: Bifunctional protein FolD (284 aa).

Residues 165–167 (GAS), serine 190, and isoleucine 231 each bind NADP(+).

It belongs to the tetrahydrofolate dehydrogenase/cyclohydrolase family. Homodimer.

The enzyme catalyses (6R)-5,10-methylene-5,6,7,8-tetrahydrofolate + NADP(+) = (6R)-5,10-methenyltetrahydrofolate + NADPH. It catalyses the reaction (6R)-5,10-methenyltetrahydrofolate + H2O = (6R)-10-formyltetrahydrofolate + H(+). It functions in the pathway one-carbon metabolism; tetrahydrofolate interconversion. In terms of biological role, catalyzes the oxidation of 5,10-methylenetetrahydrofolate to 5,10-methenyltetrahydrofolate and then the hydrolysis of 5,10-methenyltetrahydrofolate to 10-formyltetrahydrofolate. The protein is Bifunctional protein FolD of Polynucleobacter necessarius subsp. necessarius (strain STIR1).